Consider the following 387-residue polypeptide: Phosphoglycerate kinase (387 aa).

Substrate-binding positions include 21–23, Arg-36, 59–62, Arg-113, and Arg-146; these read DLN and HLGR. Residues Lys-197, Glu-314, and 340–343 each bind ATP; that span reads GGDT.

Belongs to the phosphoglycerate kinase family. As to quaternary structure, monomer.

It is found in the cytoplasm. The catalysed reaction is (2R)-3-phosphoglycerate + ATP = (2R)-3-phospho-glyceroyl phosphate + ADP. It participates in carbohydrate degradation; glycolysis; pyruvate from D-glyceraldehyde 3-phosphate: step 2/5. This is Phosphoglycerate kinase from Pseudomonas fluorescens (strain ATCC BAA-477 / NRRL B-23932 / Pf-5).